Here is a 464-residue protein sequence, read N- to C-terminus: Argininosuccinate lyase (464 aa).

It belongs to the lyase 1 family. Argininosuccinate lyase subfamily.

It localises to the cytoplasm. It catalyses the reaction 2-(N(omega)-L-arginino)succinate = fumarate + L-arginine. It participates in amino-acid biosynthesis; L-arginine biosynthesis; L-arginine from L-ornithine and carbamoyl phosphate: step 3/3. In Azotobacter vinelandii (strain DJ / ATCC BAA-1303), this protein is Argininosuccinate lyase.